Reading from the N-terminus, the 90-residue chain is Large ribosomal subunit protein bL27 (90 aa).

The protein belongs to the bacterial ribosomal protein bL27 family.

This chain is Large ribosomal subunit protein bL27, found in Rhodopseudomonas palustris (strain BisB5).